The following is a 215-amino-acid chain: Ribonuclease T (215 aa).

In terms of domain architecture, Exonuclease spans 20-194; sequence VVIDVETAGF…YDTERTAVLF (175 aa). Mg(2+)-binding residues include Asp-23, Glu-25, His-181, and Asp-186. The active-site Proton donor/acceptor is His-181.

Belongs to the RNase T family. As to quaternary structure, homodimer. It depends on Mg(2+) as a cofactor.

In terms of biological role, trims short 3' overhangs of a variety of RNA species, leaving a one or two nucleotide 3' overhang. Responsible for the end-turnover of tRNA: specifically removes the terminal AMP residue from uncharged tRNA (tRNA-C-C-A). Also appears to be involved in tRNA biosynthesis. This is Ribonuclease T from Shigella dysenteriae serotype 1 (strain Sd197).